The chain runs to 438 residues: L-cysteine:1D-myo-inositol 2-amino-2-deoxy-alpha-D-glucopyranoside ligase (438 aa).

The tract at residues 1-27 (MKSWSSRPVPELPGTGTAPRVHDTSTG) is disordered. C44 serves as a coordination point for Zn(2+). L-cysteinyl-5'-AMP contacts are provided by residues 44–47 (CGIT), T59, and 82–84 (NVT). The 'HIGH' region signature appears at 46–56 (ITPYDATHMGH). Positions 208 to 213 (DHGGDP) match the 'ERGGDP' region motif. W249 provides a ligand contact to L-cysteinyl-5'-AMP. Zn(2+) is bound at residue C253. 271–273 (GSD) is an L-cysteinyl-5'-AMP binding site. Residue H278 coordinates Zn(2+). V304 is an L-cysteinyl-5'-AMP binding site. The short motif at 310–314 (KMSKS) is the 'KMSKS' region element.

This sequence belongs to the class-I aminoacyl-tRNA synthetase family. MshC subfamily. As to quaternary structure, monomer. Zn(2+) serves as cofactor.

It catalyses the reaction 1D-myo-inositol 2-amino-2-deoxy-alpha-D-glucopyranoside + L-cysteine + ATP = 1D-myo-inositol 2-(L-cysteinylamino)-2-deoxy-alpha-D-glucopyranoside + AMP + diphosphate + H(+). Its function is as follows. Catalyzes the ATP-dependent condensation of GlcN-Ins and L-cysteine to form L-Cys-GlcN-Ins. The chain is L-cysteine:1D-myo-inositol 2-amino-2-deoxy-alpha-D-glucopyranoside ligase from Kocuria rhizophila (strain ATCC 9341 / DSM 348 / NBRC 103217 / DC2201).